The following is a 631-amino-acid chain: Extracellular metalloproteinase mep (631 aa).

Positions 1-19 (MHGLRLVCSIGTLPLVILA) are cleaved as a signal peptide. The propeptide occupies 20-241 (YPAASLHTTS…VHGVVDYVAD (222 aa)). N-linked (GlcNAc...) asparagine glycosylation is found at Asn-282, Asn-332, and Asn-364. Zn(2+) is bound at residue His-425. Residue Glu-426 is part of the active site. Zn(2+) is bound at residue His-429. N-linked (GlcNAc...) asparagine glycosylation is found at Asn-470 and Asn-505.

Belongs to the peptidase M36 family. Zn(2+) serves as cofactor.

It localises to the secreted. Its function is as follows. Secreted metalloproteinase that allows assimilation of proteinaceous substrates. The chain is Extracellular metalloproteinase mep (mep) from Aspergillus niger (strain ATCC MYA-4892 / CBS 513.88 / FGSC A1513).